Here is a 473-residue protein sequence, read N- to C-terminus: Siroheme synthase (473 aa).

Residues 1-203 are precorrin-2 dehydrogenase /sirohydrochlorin ferrochelatase; that stretch reads MTLFPIFADL…QQPGLAEQEL (203 aa). Residues 22 to 23 and 43 to 44 each bind NAD(+); these read AV and PR. Serine 128 is modified (phosphoserine). The tract at residues 216 to 473 is uroporphyrinogen-III C-methyltransferase; that stretch reads GSVVLVGAGP…GLPGPQALAA (258 aa). Position 225 (proline 225) interacts with S-adenosyl-L-methionine. Aspartate 248 serves as the catalytic Proton acceptor. The active-site Proton donor is lysine 270. S-adenosyl-L-methionine-binding positions include 302–304, isoleucine 307, 332–333, methionine 384, and glycine 413; these read GGD and TA.

The protein in the N-terminal section; belongs to the precorrin-2 dehydrogenase / sirohydrochlorin ferrochelatase family. This sequence in the C-terminal section; belongs to the precorrin methyltransferase family.

The enzyme catalyses uroporphyrinogen III + 2 S-adenosyl-L-methionine = precorrin-2 + 2 S-adenosyl-L-homocysteine + H(+). It carries out the reaction precorrin-2 + NAD(+) = sirohydrochlorin + NADH + 2 H(+). The catalysed reaction is siroheme + 2 H(+) = sirohydrochlorin + Fe(2+). It participates in cofactor biosynthesis; adenosylcobalamin biosynthesis; precorrin-2 from uroporphyrinogen III: step 1/1. The protein operates within cofactor biosynthesis; adenosylcobalamin biosynthesis; sirohydrochlorin from precorrin-2: step 1/1. It functions in the pathway porphyrin-containing compound metabolism; siroheme biosynthesis; precorrin-2 from uroporphyrinogen III: step 1/1. Its pathway is porphyrin-containing compound metabolism; siroheme biosynthesis; siroheme from sirohydrochlorin: step 1/1. It participates in porphyrin-containing compound metabolism; siroheme biosynthesis; sirohydrochlorin from precorrin-2: step 1/1. Multifunctional enzyme that catalyzes the SAM-dependent methylations of uroporphyrinogen III at position C-2 and C-7 to form precorrin-2 via precorrin-1. Then it catalyzes the NAD-dependent ring dehydrogenation of precorrin-2 to yield sirohydrochlorin. Finally, it catalyzes the ferrochelation of sirohydrochlorin to yield siroheme. This Bordetella pertussis (strain Tohama I / ATCC BAA-589 / NCTC 13251) protein is Siroheme synthase.